The following is an 89-amino-acid chain: uncharacterized protein (89 aa).

This is an uncharacterized protein from Archaeoglobus fulgidus (strain ATCC 49558 / DSM 4304 / JCM 9628 / NBRC 100126 / VC-16).